The following is a 380-amino-acid chain: 1-deoxy-D-xylulose 5-phosphate reductoisomerase (380 aa).

8 residues coordinate NADPH: Ser10, Gly11, Ser12, Ile13, Gly36, Lys37, Asn38, and Asn120. 1-deoxy-D-xylulose 5-phosphate is bound at residue Lys121. Glu122 lines the NADPH pocket. Asp146 serves as a coordination point for Mn(2+). 1-deoxy-D-xylulose 5-phosphate-binding residues include Ser147, Glu148, Ser172, and His195. Glu148 contributes to the Mn(2+) binding site. NADPH is bound at residue Gly201. 4 residues coordinate 1-deoxy-D-xylulose 5-phosphate: Ser208, Asn213, Lys214, and Glu217. Glu217 contacts Mn(2+).

This sequence belongs to the DXR family. It depends on Mg(2+) as a cofactor. Mn(2+) serves as cofactor.

The catalysed reaction is 2-C-methyl-D-erythritol 4-phosphate + NADP(+) = 1-deoxy-D-xylulose 5-phosphate + NADPH + H(+). Its pathway is isoprenoid biosynthesis; isopentenyl diphosphate biosynthesis via DXP pathway; isopentenyl diphosphate from 1-deoxy-D-xylulose 5-phosphate: step 1/6. In terms of biological role, catalyzes the NADPH-dependent rearrangement and reduction of 1-deoxy-D-xylulose-5-phosphate (DXP) to 2-C-methyl-D-erythritol 4-phosphate (MEP). The polypeptide is 1-deoxy-D-xylulose 5-phosphate reductoisomerase (Bacillus cereus (strain ATCC 10987 / NRS 248)).